A 461-amino-acid chain; its full sequence is Transforming growth factor beta-1-induced transcript 1 protein (461 aa).

Methionine 1 is subject to N-acetylmethionine. A disordered region spans residues 1-86; it reads MEDLDALLSD…PPFSSSSGVL (86 aa). A transcription activation region spans residues 1-200; it reads MEDLDALLSD…GCPSPPGQTN (200 aa). An interaction with PTK2B/PYK2 region spans residues 1-240; it reads MEDLDALLSD…CNKPIAGQVV (240 aa). The LD motif 1 signature appears at 3–15; it reads DLDALLSDLETTT. Threonine 33 bears the Phosphothreonine mark. Tyrosine 38 is modified (phosphotyrosine). Polar residues predominate over residues 41-52; the sequence is QPQTGSGESSGA. Tyrosine 60 is subject to Phosphotyrosine; by FAK2 and FYN. Position 68 is a phosphoserine (serine 68). Positions 69 to 83 are enriched in low complexity; the sequence is PKSVAPVAPPFSSSS. An interaction with PTK2/FAK1 region spans residues 83–136; the sequence is SGVLGNGLCELDRLLQELNATQFNITDEIMSQFPSSKMAEGEGKEDQSEDKSIT. Positions 92–104 match the LD motif 2 motif; sequence ELDRLLQELNATQ. Residues 116-154 form a disordered region; the sequence is PSSKMAEGEGKEDQSEDKSITTVPSSTFPAPSKPSATSA. Residues 121-134 are compositionally biased toward basic and acidic residues; sequence AEGEGKEDQSEDKS. The segment covering 135 to 154 has biased composition (polar residues); sequence ITTVPSSTFPAPSKPSATSA. Phosphoserine is present on residues serine 140, serine 141, serine 164, and serine 186. The LD motif 3 motif lies at 157–168; it reads ELDRLMASLSDF. Positions 171–204 are disordered; sequence QNHLPASGPPQPPAVSPTREGCPSPPGQTNKGSL. Threonine 188 bears the Phosphothreonine mark. Residue serine 194 is modified to Phosphoserine. Residues 203–215 carry the LD motif 4 motif; sequence SLDTMLGLLQSDL. LIM zinc-binding domains are found at residues 226–285, 286–343, 344–403, and 404–461; these read GLCG…RFSP, RCGF…QLFA, PRCQ…QRGS, and LCAT…KLFG. The residue at position 403 (serine 403) is a Phosphoserine. Threonine 407 bears the Phosphothreonine mark.

Belongs to the paxillin family. In terms of assembly, homooligomer. Interacts with PPARG. Interacts with TRAF4. Interacts with CRIP2. Interacts with HSPB1. Interacts with ILK. Interacts with LIMS1 and LIMS2. Interacts with NCK2. Interacts with NUDT16L1. Interacts with PAK. Interacts with PTPN12. Interacts with TCF3. Interacts with TCF7L2. Interacts with VCL. Interacts (via LD motif 3) with GIT1. Also interacts with GIT2. Forms a complex with ARHGEF7. Interacts with AR/androgen receptor in a ligand-dependent manner. Interacts with CSK. Interacts with PTK2/FAK1 and PTK2B/PYK2. Interacts with SLC6A3 and SLC6A4. Interacts with NR3C1. Interacts with SMAD3. Interacts with MAPK15. Interacts with SRC. Interacts with LYN. Interacts with talin. Interacts (via LIM zinc-binding domain 2) with CBLC (via RING-type zinc finger); the interaction is direct and enhances CBLC E3 ubiquitin-protein ligase activity. Interacts with PARVA. Interacts with PXN. Phosphorylated by gonadotropin-releasing hormone-activated SRC. As to expression, strongly expressed in large intestine, lung, spleen, testis, uterus and to a lower extent in brain, kidney and liver (at protein level). In brain, expressed by neuronal and non neuronal cells (at protein level).

The protein localises to the cell junction. Its subcellular location is the focal adhesion. It is found in the nucleus matrix. The protein resides in the cytoplasm. It localises to the cytoskeleton. Functionally, functions as a molecular adapter coordinating multiple protein-protein interactions at the focal adhesion complex and in the nucleus. Links various intracellular signaling modules to plasma membrane receptors and regulates the Wnt and TGFB signaling pathways. May also regulate SLC6A3 and SLC6A4 targeting to the plasma membrane hence regulating their activity. In the nucleus, functions as a nuclear receptor coactivator regulating glucocorticoid, androgen, mineralocorticoid and progesterone receptor transcriptional activity. May play a role in the processes of cell growth, proliferation, migration, differentiation and senescence. May have a zinc-dependent DNA-binding activity. This is Transforming growth factor beta-1-induced transcript 1 protein (Tgfb1i1) from Rattus norvegicus (Rat).